Consider the following 74-residue polypeptide: Large ribosomal subunit protein uL14c (74 aa).

It belongs to the universal ribosomal protein uL14 family. In terms of assembly, part of the 50S ribosomal subunit.

It is found in the plastid. The protein resides in the chloroplast. Functionally, binds to 23S rRNA. The sequence is that of Large ribosomal subunit protein uL14c (rpl14) from Oenothera ammophila (Evening primerose).